The chain runs to 311 residues: Glutaminase (311 aa).

7 residues coordinate substrate: Ser-66, Asn-116, Glu-162, Asn-169, Tyr-193, Tyr-245, and Val-263.

Belongs to the glutaminase family. As to quaternary structure, homotetramer.

It catalyses the reaction L-glutamine + H2O = L-glutamate + NH4(+). This is Glutaminase from Rhodopseudomonas palustris (strain HaA2).